The chain runs to 124 residues: uncharacterized protein (124 aa).

This is an uncharacterized protein from Acanthamoeba polyphaga (Amoeba).